Reading from the N-terminus, the 277-residue chain is Inositol monophosphatase 1 (277 aa).

Mg(2+) contacts are provided by Glu70, Asp90, Ile92, and Asp93. Glu70 provides a ligand contact to substrate. Position 92 to 95 (92 to 95 (IDGT)) interacts with substrate. Position 168 is a phosphothreonine (Thr168). Substrate is bound by residues 194–196 (GTA), Glu213, and Asp220. A Mg(2+)-binding site is contributed by Asp220.

It belongs to the inositol monophosphatase superfamily. Homodimer. Mg(2+) is required as a cofactor.

The protein resides in the cytoplasm. It carries out the reaction a myo-inositol phosphate + H2O = myo-inositol + phosphate. The enzyme catalyses 1D-myo-inositol 1-phosphate + H2O = myo-inositol + phosphate. The catalysed reaction is 1D-myo-inositol 2-phosphate + H2O = myo-inositol + phosphate. It catalyses the reaction 1D-myo-inositol 3-phosphate + H2O = myo-inositol + phosphate. It carries out the reaction 1D-myo-inositol 4-phosphate + H2O = myo-inositol + phosphate. The enzyme catalyses 1D-myo-inositol 5-phosphate + H2O = myo-inositol + phosphate. The catalysed reaction is 1D-myo-inositol 6-phosphate + H2O = myo-inositol + phosphate. It catalyses the reaction scyllo-inositol 1-phosphate + H2O = scyllo-inositol + phosphate. It carries out the reaction alpha-D-galactose 1-phosphate + H2O = D-galactose + phosphate. The enzyme catalyses alpha-D-glucose 1-phosphate + H2O = D-glucose + phosphate. The catalysed reaction is D-glucose 6-phosphate + H2O = D-glucose + phosphate. It catalyses the reaction beta-D-fructose 1-phosphate + H2O = D-fructose + phosphate. It carries out the reaction glycerol 2-phosphate + H2O = glycerol + phosphate. The enzyme catalyses adenosine 2'-phosphate + H2O = adenosine + phosphate. It functions in the pathway polyol metabolism; myo-inositol biosynthesis; myo-inositol from D-glucose 6-phosphate: step 2/2. With respect to regulation, inhibited by Li(+), Ca(2+) and Mn(2+), but also by Mg(2+) at concentrations above 3 mM. Functionally, phosphatase involved in the dephosphorylation of myo-inositol monophosphate to generate myo-inositol. Is also able to dephosphorylate scyllo-inositol-phosphate, myo-inositol 1,4-diphosphate, scyllo-inositol-1,3-diphosphate and scyllo-inositol-1,4-diphosphate. Also dephosphorylates in vitro other sugar-phosphates including D-galactose-1-phosphate, glucose-1-phosphate, glucose-6-phosphate, fructose-1-phosphate, beta-glycerophosphate and 2'-AMP. Responsible for the provision of inositol required for synthesis of phosphatidylinositol and polyphosphoinositides, and involved in maintaining normal brain function. Has been implicated as the pharmacological target for lithium Li(+) action in brain. The chain is Inositol monophosphatase 1 (IMPA1) from Pongo abelii (Sumatran orangutan).